A 447-amino-acid chain; its full sequence is MNAWEVNFDGLVGLTHHYAGLSFGNKASTRHRFQVSNPRLAAKQGLLKMKTLADAGFPQAVIPPHERPFIPVLRQLGFSGSDEQVLEKVVRQAPHWLSSVSSASPMWVANAATIAPSADTLDGKVHLTVANLNNKFHRSLEAPVTESLLKAIFNDEEKFSVHSALPQVALLGDEGAANHNRLGGHYGEPGMQLFVYGREEGNDTRPSRYPARQTREASEAVARLNQVNPQQVIFAQQNPDVIDQGVFHNDVIAVSNRQVLFCHQQAFARQSQLLANLRARVNGFMAIEVPATQVSVSDAVSTYLFNSQLLSRDDGSMMLVLPQECREHAGVWGYLNELLAADNPISELKVFDLRESMANGGGPACLRLRVVLTQEERRAVNPAVMMNDTLFNALNDWVDRYYRDRLTAADLADPQLLREGREALDVLSQLLNLGSVYPFQREGGGNG.

Substrate is bound by residues 19 to 28, Asn110, and 137 to 138; these read AGLSFGNKAS and HR. Glu174 is a catalytic residue. Arg212 contacts substrate. His248 is a catalytic residue. Substrate-binding residues include Asp250 and Asn359. Cys365 serves as the catalytic Nucleophile.

Belongs to the succinylarginine dihydrolase family. In terms of assembly, homodimer.

The enzyme catalyses N(2)-succinyl-L-arginine + 2 H2O + 2 H(+) = N(2)-succinyl-L-ornithine + 2 NH4(+) + CO2. It participates in amino-acid degradation; L-arginine degradation via AST pathway; L-glutamate and succinate from L-arginine: step 2/5. In terms of biological role, catalyzes the hydrolysis of N(2)-succinylarginine into N(2)-succinylornithine, ammonia and CO(2). This chain is N-succinylarginine dihydrolase, found in Escherichia coli O157:H7.